We begin with the raw amino-acid sequence, 281 residues long: NAD kinase (281 aa).

The active-site Proton acceptor is aspartate 61. Residues 61 to 62, 134 to 135, arginine 145, aspartate 164, 175 to 180, and glutamine 234 each bind NAD(+); these read DG, ND, and TAYSLS.

It belongs to the NAD kinase family. A divalent metal cation is required as a cofactor.

It localises to the cytoplasm. It catalyses the reaction NAD(+) + ATP = ADP + NADP(+) + H(+). Its function is as follows. Involved in the regulation of the intracellular balance of NAD and NADP, and is a key enzyme in the biosynthesis of NADP. Catalyzes specifically the phosphorylation on 2'-hydroxyl of the adenosine moiety of NAD to yield NADP. This Clostridium botulinum (strain 657 / Type Ba4) protein is NAD kinase.